The chain runs to 65 residues: UPF0370 protein Ent638_2968 (65 aa).

Residues 4–24 (LSKYWWILVLVFLVGVLLNVI) traverse the membrane as a helical segment. The tract at residues 39–65 (KPELPPHRDFNDKWDDDDNWPKKDQKK) is disordered. Basic and acidic residues predominate over residues 42-65 (LPPHRDFNDKWDDDDNWPKKDQKK).

Belongs to the UPF0370 family.

Its subcellular location is the cell membrane. The polypeptide is UPF0370 protein Ent638_2968 (Enterobacter sp. (strain 638)).